The primary structure comprises 306 residues: tRNA pseudouridine synthase B (306 aa).

D39 functions as the Nucleophile in the catalytic mechanism.

This sequence belongs to the pseudouridine synthase TruB family. Type 1 subfamily.

The enzyme catalyses uridine(55) in tRNA = pseudouridine(55) in tRNA. Its function is as follows. Responsible for synthesis of pseudouridine from uracil-55 in the psi GC loop of transfer RNAs. The polypeptide is tRNA pseudouridine synthase B (Arthrobacter sp. (strain FB24)).